A 568-amino-acid polypeptide reads, in one-letter code: MRFTKFYAPSLKEAPKDASLPSHIFLTRAGFIEQIGSGLYNFLPLGKRVLDKIKNIVKEEMDKAGAQEVNLSFITPASLWQESGRYNVFGKELLRFKDRKENEFVLGPTHEEAMLSLVKNKITSYKQLPLHLYQIGLKFRDEARPRFGLLRCREFLMKDGYSFHANEEDLGCEFELMYKTYSQILQRMGLDFRAVEADSGAIGGSGSKEFMVLAKNGEDDILICENCDYAANVEAAKRAKKTCQDERPEANYASKFHTPNIKTIDSLAQFFKINAFYTIKAVVKKAIYENESKLVVFFIRGSDDLQEIKAQNACSALELVDASEEELEKAGLVAGFIGFVGLKDIDFYIDFELENEKQMIMGANEKDYHLIGIDVVNLNKDRFKDLIEVKEGDCCAKCGAKLKQSKGIEVGHIFKLGQKYSKAMNANFLDENGKSQPFYMGCYGIGVSRLLAVAIEASHDEKGCIWNKTLAPFVLEIIVSNLKDEKALEFANKLYEDLTNLGLEVLLDDRNERFGVKMNDFELMGFPYALVIGKGLENNEIELIQREGLVKELIKTDELMEILKKKVL.

This sequence belongs to the class-II aminoacyl-tRNA synthetase family. ProS type 1 subfamily. As to quaternary structure, homodimer.

The protein resides in the cytoplasm. It catalyses the reaction tRNA(Pro) + L-proline + ATP = L-prolyl-tRNA(Pro) + AMP + diphosphate. Catalyzes the attachment of proline to tRNA(Pro) in a two-step reaction: proline is first activated by ATP to form Pro-AMP and then transferred to the acceptor end of tRNA(Pro). As ProRS can inadvertently accommodate and process non-cognate amino acids such as alanine and cysteine, to avoid such errors it has two additional distinct editing activities against alanine. One activity is designated as 'pretransfer' editing and involves the tRNA(Pro)-independent hydrolysis of activated Ala-AMP. The other activity is designated 'posttransfer' editing and involves deacylation of mischarged Ala-tRNA(Pro). The misacylated Cys-tRNA(Pro) is not edited by ProRS. The chain is Proline--tRNA ligase from Campylobacter jejuni subsp. jejuni serotype O:6 (strain 81116 / NCTC 11828).